The chain runs to 94 residues: Small ribosomal subunit protein uS19 (94 aa).

The protein belongs to the universal ribosomal protein uS19 family.

Protein S19 forms a complex with S13 that binds strongly to the 16S ribosomal RNA. The sequence is that of Small ribosomal subunit protein uS19 from Desulforamulus reducens (strain ATCC BAA-1160 / DSM 100696 / MI-1) (Desulfotomaculum reducens).